Reading from the N-terminus, the 362-residue chain is Porin Omp2b (362 aa).

An N-terminal signal peptide occupies residues 1-22; it reads MNIKSLLLGSAAALVAASGAQA.

It belongs to the alphaproteobacteria porin family. Homotrimer.

It is found in the cell outer membrane. Forms passive diffusion pores that allow small molecular weight hydrophilic materials across the outer membrane. The chain is Porin Omp2b (omp2b) from Brucella melitensis biotype 1 (strain ATCC 23456 / CCUG 17765 / NCTC 10094 / 16M).